The sequence spans 255 residues: Indole-3-glycerol phosphate synthase (255 aa).

The protein belongs to the TrpC family.

It catalyses the reaction 1-(2-carboxyphenylamino)-1-deoxy-D-ribulose 5-phosphate + H(+) = (1S,2R)-1-C-(indol-3-yl)glycerol 3-phosphate + CO2 + H2O. Its pathway is amino-acid biosynthesis; L-tryptophan biosynthesis; L-tryptophan from chorismate: step 4/5. In Streptococcus pneumoniae (strain 70585), this protein is Indole-3-glycerol phosphate synthase.